We begin with the raw amino-acid sequence, 626 residues long: MSKKGRSKGEKPEMETDAVQMANEELRAKLTSIQIEFQQEKSKVGKLRERLQEAKLEREQEQRRHTAYISELKAKLHEEKTKELQALREGLIRQHEQEAARTAKIKEGELQRLQATLNVLRDGAADKVKTALLTEAREEARRAFDGERLRLQQEILELKAARKQAEEALSNCMQADKTKAADLRAAYQAHQDEVHRIKRECERDIRRLMDEIKGKDRVILALEKELGVQAGQTQKLLLQKEALDEQLVQVKEAERHHSSPKRELPPGIGDMVELMGVQDQHMDERDVRRFQLKIAELNSVIRKLEDRNTLLADERNELLKRSRETEVQLKPLVEKNKRMNKKNEDLLQSIQRMEEKIKNLTRENVEMKEKLSAQASLKRHTSLNDLSLTRDEQEIEFLRLQVLEQQHVIDDLSLERERLLRSKRHRGKSLKPPKKHVVETFFGFDEESVDSETLSETSYNTDRTDRTPATPEEDLDDATAREEADLRFCQLTREYQALQRAYALLQEQVGGTLDAEREARTREQLQADLLRCQAKIEDLEKLLVEKGQDSKWVEEKQLLIRTNQDLLEKIYRLEMEENQLKNEMQDAKDQNELLEFRVLELEVRDSICCKLSNGADILFEPKLKFM.

The tract at residues 1 to 22 (MSKKGRSKGEKPEMETDAVQMA) is disordered. Residues 1–365 (MSKKGRSKGE…KIKNLTRENV (365 aa)) form a mediates association with microtubules region. 2 coiled-coil regions span residues 19-255 (VQMA…EAER) and 284-413 (ERDV…DDLS). The interval 365–626 (VEMKEKLSAQ…ILFEPKLKFM (262 aa)) is mediates interaction with TYK2 and GABBR1. Phosphoserine is present on Ser382. Over residues 452 to 461 (ETLSETSYNT) the composition is skewed to polar residues. The interval 452-477 (ETLSETSYNTDRTDRTPATPEEDLDD) is disordered. Residue Thr470 is modified to Phosphothreonine. Residues 490 to 604 (QLTREYQALQ…EFRVLELEVR (115 aa)) are a coiled coil.

It belongs to the JAKMIP family. Homodimer. Forms a complex with GABBR1 and KIF5B/kinesin-1. Interacts with JAK1 and TYK2. Predominantly expressed in neural tissues and lymphoid cells (at protein level). Isoform 2, isoform 3 and isoform 4 are specifically expressed in brain and retina. Isoform 1 and isoform 5 are also detected in liver, lung and skeletal muscle. Also detected in testis and to a lower extent spleen and intestine.

It is found in the cytoplasm. Its subcellular location is the cytoskeleton. The protein localises to the membrane. Associates with microtubules and may play a role in the microtubule-dependent transport of the GABA-B receptor. May play a role in JAK1 signaling and regulate microtubule cytoskeleton rearrangements. This is Janus kinase and microtubule-interacting protein 1 (JAKMIP1) from Homo sapiens (Human).